A 252-amino-acid polypeptide reads, in one-letter code: dITP/XTP pyrophosphatase (252 aa).

A substrate-binding site is contributed by 7–12; it reads THNEGK. Aspartate 74 serves as the catalytic Proton acceptor. Aspartate 74 is a binding site for Mg(2+). Residues serine 75 and 193–196 each bind substrate; that span reads FGYD. Positions 202–229 are disordered; sequence DDQPAGRVSTEPDHEGEPLTSAEMTPAE. Residues lysine 230 and 235-236 each bind substrate; that span reads HR.

The protein belongs to the HAM1 NTPase family. Homodimer. It depends on Mg(2+) as a cofactor.

The enzyme catalyses XTP + H2O = XMP + diphosphate + H(+). It catalyses the reaction dITP + H2O = dIMP + diphosphate + H(+). It carries out the reaction ITP + H2O = IMP + diphosphate + H(+). Its function is as follows. Pyrophosphatase that catalyzes the hydrolysis of nucleoside triphosphates to their monophosphate derivatives, with a high preference for the non-canonical purine nucleotides XTP (xanthosine triphosphate), dITP (deoxyinosine triphosphate) and ITP. Seems to function as a house-cleaning enzyme that removes non-canonical purine nucleotides from the nucleotide pool, thus preventing their incorporation into DNA/RNA and avoiding chromosomal lesions. This Bifidobacterium longum (strain NCC 2705) protein is dITP/XTP pyrophosphatase.